The sequence spans 733 residues: E3 ubiquitin-protein ligase COP1 (733 aa).

The tract at residues 1–43 is disordered; it reads MSGSRQAGSGSAGTSPGSSAASSVTSASSSLSSSPSPPSVAAS. A Nuclear localization signal 1 motif is present at residues 111-115; that stretch reads SSRKR. An RING-type zinc finger spans residues 138–176; it reads CPICFDMIEEAYMTKCGHSFCYKCIHQSLEDNNRCPKCN. The Nuclear localization signal 2 motif lies at 197–208; sequence KQKQRFEEKRFK. A coiled-coil region spans residues 231 to 306; sequence DQDNLDLANV…RVEEMSGLYS (76 aa). Residues 237-247 carry the Nuclear export signal motif; sequence LANVNLMLELL. The disordered stretch occupies residues 307 to 327; the sequence is PVSEDSTVPQFEAPSPSHSSI. WD repeat units follow at residues 421–460, 470–510, 513–553, 555–595, 599–637, 640–679, and 695–731; these read NGSSIVSSIEFDRDCDYFAIAGVTKKIKVYEYGTVIQDAV, TCNS…RSKV, EHEK…SVAS, EAKA…QPIM, GHRKAVSYAKFVSGEEIVSASTDSQLKLWNVGKPYCLRS, GHINEKNFVGLASNGDYIACGSENNSLYLYYKGLSKTLLT, and EDDTNEFVSAVCWRALSDGESNVLIAANSQGTIKVLE. Positions 645-647 are interaction with TRIB1; it reads KNF.

This sequence belongs to the COP1 family. In terms of assembly, homodimer. Homodimerization is mediated by the coiled coil domain. Component of the DCX DET1-COP1 ubiquitin ligase complex at least composed of RBX1, DET1, DDB1, CUL4A and COP1. Isoform 2 does not interact with CUL4A but still binds to RBX1, suggesting that the interaction may be mediated by another cullin protein. Isoform 1 and isoform 2 interact with CUL5 but not with CUL1, CUL2 not CUL3. Interacts with bZIP transcription factors JUN, JUNB and JUND but not with FOS, ATF2 nor XBP1. Interacts with p53 (TP53). Interacts with COPS6; this interaction stabilizes RFWD2 through reducing its auto-ubiquitination and decelerating its turnover rate. Interacts with SFN; this interaction leads to SFN degradation. Interacts with p53/TP53 and MTA1. Interacts with TRIB1 (via C-terminus) and TRIB2.

The protein localises to the nucleus speckle. The protein resides in the cytoplasm. The enzyme catalyses S-ubiquitinyl-[E2 ubiquitin-conjugating enzyme]-L-cysteine + [acceptor protein]-L-lysine = [E2 ubiquitin-conjugating enzyme]-L-cysteine + N(6)-ubiquitinyl-[acceptor protein]-L-lysine.. Its pathway is protein modification; protein ubiquitination. TRIB1 competes with substrates for RFWD2 binding. Functionally, E3 ubiquitin-protein ligase that mediates ubiquitination and subsequent proteasomal degradation of target proteins. E3 ubiquitin ligases accept ubiquitin from an E2 ubiquitin-conjugating enzyme in the form of a thioester and then directly transfers the ubiquitin to targeted substrates. Involved in JUN ubiquitination and degradation. Directly involved in p53 (TP53) ubiquitination and degradation, thereby abolishing p53-dependent transcription and apoptosis. Ubiquitinates p53 independently of MDM2 or RCHY1. Probably mediates E3 ubiquitin ligase activity by functioning as the essential RING domain subunit of larger E3 complexes. In contrast, it does not constitute the catalytic RING subunit in the DCX DET1-COP1 complex that negatively regulates JUN, the ubiquitin ligase activity being mediated by RBX1. Involved in 14-3-3 protein sigma/SFN ubiquitination and proteasomal degradation, leading to AKT activation and promotion of cell survival. Ubiquitinates MTA1 leading to its proteasomal degradation. Upon binding to TRIB1, ubiquitinates CEBPA, which lacks a canonical COP1-binding motif. This chain is E3 ubiquitin-protein ligase COP1, found in Mus musculus (Mouse).